The chain runs to 361 residues: Probable pectinesterase 49 (361 aa).

The first 22 residues, 1-22 (MGYISLALVALLVFFASPVVLA), serve as a signal peptide directing secretion. N-linked (GlcNAc...) asparagine glycosylation occurs at N128. Q174 contacts substrate. The active-site Proton donor is the D197. D218 (nucleophile) is an active-site residue. The substrate site is built by R275 and W277.

The protein belongs to the pectinesterase family. In terms of tissue distribution, expressed in flower buds.

It is found in the secreted. It localises to the cell wall. The catalysed reaction is [(1-&gt;4)-alpha-D-galacturonosyl methyl ester](n) + n H2O = [(1-&gt;4)-alpha-D-galacturonosyl](n) + n methanol + n H(+). It functions in the pathway glycan metabolism; pectin degradation; 2-dehydro-3-deoxy-D-gluconate from pectin: step 1/5. Functionally, acts in the modification of cell walls via demethylesterification of cell wall pectin. The sequence is that of Probable pectinesterase 49 (PME49) from Arabidopsis thaliana (Mouse-ear cress).